We begin with the raw amino-acid sequence, 883 residues long: Alanine--tRNA ligase (883 aa).

4 residues coordinate Zn(2+): H565, H569, C675, and H679.

It belongs to the class-II aminoacyl-tRNA synthetase family. Requires Zn(2+) as cofactor.

It localises to the cytoplasm. The catalysed reaction is tRNA(Ala) + L-alanine + ATP = L-alanyl-tRNA(Ala) + AMP + diphosphate. In terms of biological role, catalyzes the attachment of alanine to tRNA(Ala) in a two-step reaction: alanine is first activated by ATP to form Ala-AMP and then transferred to the acceptor end of tRNA(Ala). Also edits incorrectly charged Ser-tRNA(Ala) and Gly-tRNA(Ala) via its editing domain. This is Alanine--tRNA ligase from Rhodospirillum rubrum (strain ATCC 11170 / ATH 1.1.1 / DSM 467 / LMG 4362 / NCIMB 8255 / S1).